A 425-amino-acid chain; its full sequence is UPF0761 membrane protein XCV0968 (425 aa).

A run of 6 helical transmembrane segments spans residues V48–F68, F105–E125, G154–F174, L182–I202, A216–F236, and A250–L270.

This sequence belongs to the UPF0761 family.

The protein resides in the cell inner membrane. In Xanthomonas euvesicatoria pv. vesicatoria (strain 85-10) (Xanthomonas campestris pv. vesicatoria), this protein is UPF0761 membrane protein XCV0968.